A 682-amino-acid chain; its full sequence is Methionine--tRNA ligase (682 aa).

The 'HIGH' region signature appears at 14–24 (PYANGPVHLGH). 4 residues coordinate Zn(2+): Cys-145, Cys-148, Cys-158, and Cys-161. The 'KMSKS' region motif lies at 331–335 (KMSKS). An ATP-binding site is contributed by Lys-334. The region spanning 580–682 (AFAAVDLRVA…SGAKPGQRIK (103 aa)) is the tRNA-binding domain.

This sequence belongs to the class-I aminoacyl-tRNA synthetase family. MetG type 1 subfamily. As to quaternary structure, homodimer. Zn(2+) is required as a cofactor.

It localises to the cytoplasm. It catalyses the reaction tRNA(Met) + L-methionine + ATP = L-methionyl-tRNA(Met) + AMP + diphosphate. Is required not only for elongation of protein synthesis but also for the initiation of all mRNA translation through initiator tRNA(fMet) aminoacylation. The sequence is that of Methionine--tRNA ligase from Pseudomonas syringae pv. tomato (strain ATCC BAA-871 / DC3000).